The following is a 593-amino-acid chain: DNA topoisomerase I, mitochondrial (593 aa).

A mitochondrion-targeting transit peptide spans 1-43 (MLLLWLRALCRRFQHVPRRVPSRQVSRGSKASRAGWGETSKSS). Interaction with DNA regions lie at residues 254 to 255 (KY), 317 to 322 (RTGNEK), and 414 to 416 (TAK). A Topo IB-type catalytic domain is found at 261–593 (SSKPKGEMDW…FNQAGEDFEF (333 aa)). Tyrosine 551 serves as the catalytic O-(3'-phospho-DNA)-tyrosine intermediate.

This sequence belongs to the type IB topoisomerase family. It depends on Ca(2+) as a cofactor. Mg(2+) serves as cofactor.

The protein localises to the mitochondrion. It carries out the reaction ATP-independent breakage of single-stranded DNA, followed by passage and rejoining.. In terms of biological role, releases the supercoiling and torsional tension of DNA introduced during duplication of mitochondrial DNA by transiently cleaving and rejoining one strand of the DNA duplex. Introduces a single-strand break via transesterification at a target site in duplex DNA. The scissile phosphodiester is attacked by the catalytic tyrosine of the enzyme, resulting in the formation of a DNA-(3'-phosphotyrosyl)-enzyme intermediate and the expulsion of a 5'-OH DNA strand. The free DNA strand then rotates around the intact phosphodiester bond on the opposing strand, thus removing DNA supercoils. Finally, in the religation step, the DNA 5'-OH attacks the covalent intermediate to expel the active-site tyrosine and restore the DNA phosphodiester backbone. In Rattus norvegicus (Rat), this protein is DNA topoisomerase I, mitochondrial (Top1mt).